A 161-amino-acid chain; its full sequence is S-ribosylhomocysteine lyase (161 aa).

Fe cation contacts are provided by His57, His61, and Cys124.

This sequence belongs to the LuxS family. Homodimer. Fe cation is required as a cofactor.

The catalysed reaction is S-(5-deoxy-D-ribos-5-yl)-L-homocysteine = (S)-4,5-dihydroxypentane-2,3-dione + L-homocysteine. Functionally, involved in the synthesis of autoinducer 2 (AI-2) which is secreted by bacteria and is used to communicate both the cell density and the metabolic potential of the environment. The regulation of gene expression in response to changes in cell density is called quorum sensing. Catalyzes the transformation of S-ribosylhomocysteine (RHC) to homocysteine (HC) and 4,5-dihydroxy-2,3-pentadione (DPD). This is S-ribosylhomocysteine lyase from Macrococcus caseolyticus (strain JCSC5402) (Macrococcoides caseolyticum).